Here is a 121-residue protein sequence, read N- to C-terminus: Small ribosomal subunit protein bS16 (121 aa).

Residues 85–110 (REARNNPKKAEPGKKAQERAAERAAK) are compositionally biased toward basic and acidic residues. Positions 85–121 (REARNNPKKAEPGKKAQERAAERAAKAAEASEAASAE) are disordered. Over residues 111-121 (AAEASEAASAE) the composition is skewed to low complexity.

Belongs to the bacterial ribosomal protein bS16 family.

The protein is Small ribosomal subunit protein bS16 of Azorhizobium caulinodans (strain ATCC 43989 / DSM 5975 / JCM 20966 / LMG 6465 / NBRC 14845 / NCIMB 13405 / ORS 571).